We begin with the raw amino-acid sequence, 237 residues long: uncharacterized protein (237 aa).

A divalent metal cation-binding residues include glutamate 91, glutamate 93, and aspartate 122.

It belongs to the FAH family.

This is an uncharacterized protein from Methanocaldococcus jannaschii (strain ATCC 43067 / DSM 2661 / JAL-1 / JCM 10045 / NBRC 100440) (Methanococcus jannaschii).